The primary structure comprises 417 residues: MSVKPEKPVWMSQEDYDRQYGTVGDGENKTAIVEKTTITTQSSSNVVVGEASKTSSDIGANKIQKRKRHDDFALEEKKRRERERRLREEQLKEHEIKLTAEKITNVNNLVREHYNERTYIANRTKRNQSPIIKLRNFNNAIKFMLIDKFTHTGDVVLELGCGKGGDLRKYGAAGISQFIGIDISNASIQEAHKRYQSMKNLDFQAILITGDCFGESLGVAVEPFPECRFPCDVVSTQFCLHYAFETEEKARRALLNVSKSLKVGGRFFGTIPDSEFLRYKLNKIGKDVQEPKWGNQIYSIKFSNNDYHENGNEFPSPYGQMYTFWLEDAIDNVPEYVVPFETLRSLADEYGMELILQMPFNQFFVQEIPKWVNRFSPKMREGLTRSDGKYGVEGIEKEPAAYLYTVFAFKKVREHVE.

The mRNA cap 0 methyltransferase domain maps to 129 to 412; the sequence is SPIIKLRNFN…LYTVFAFKKV (284 aa). 138–139 contacts mRNA; sequence NN. S-adenosyl-L-methionine-binding residues include K142, G160, D182, D211, Q237, and Y242.

Belongs to the class I-like SAM-binding methyltransferase superfamily. mRNA cap 0 methyltransferase family.

The protein localises to the nucleus. The enzyme catalyses a 5'-end (5'-triphosphoguanosine)-ribonucleoside in mRNA + S-adenosyl-L-methionine = a 5'-end (N(7)-methyl 5'-triphosphoguanosine)-ribonucleoside in mRNA + S-adenosyl-L-homocysteine. In terms of biological role, responsible for methylating the 5'-cap structure of mRNAs. In Candida glabrata (strain ATCC 2001 / BCRC 20586 / JCM 3761 / NBRC 0622 / NRRL Y-65 / CBS 138) (Yeast), this protein is mRNA cap guanine-N(7) methyltransferase (ABD1).